Consider the following 233-residue polypeptide: Tropomyosin (233 aa).

Residues 6-222 (FDTVNEKYQE…KERYKAISDE (217 aa)) adopt a coiled-coil conformation. Positions 48–88 (MERSEERLQTATEKLEEASKAADESERNRKVLENLNNASEE) are disordered. Over residues 51 to 79 (SEERLQTATEKLEEASKAADESERNRKVL) the composition is skewed to basic and acidic residues.

This sequence belongs to the tropomyosin family. As to quaternary structure, homodimer.

Functionally, tropomyosin, in association with the troponin complex, plays a central role in the calcium dependent regulation of muscle contraction. This chain is Tropomyosin, found in Magallana gigas (Pacific oyster).